A 439-amino-acid chain; its full sequence is Ribulose bisphosphate carboxylase/oxygenase activase 2, chloroplastic (439 aa).

Residues methionine 1–alanine 58 constitute a chloroplast transit peptide. Glycine 169 to serine 176 contributes to the ATP binding site.

This sequence belongs to the RuBisCO activase family.

Its subcellular location is the plastid. It localises to the chloroplast stroma. Its function is as follows. Activation of RuBisCO (ribulose-1,5-bisphosphate carboxylase/oxygenase; EC 4.1.1.39) involves the ATP-dependent carboxylation of the epsilon-amino group of lysine leading to a carbamate structure. The polypeptide is Ribulose bisphosphate carboxylase/oxygenase activase 2, chloroplastic (RCA) (Nicotiana tabacum (Common tobacco)).